A 111-amino-acid polypeptide reads, in one-letter code: uncharacterized protein (111 aa).

This is an uncharacterized protein from Escherichia coli (Bacteriophage T4).